Consider the following 426-residue polypeptide: Histidine--tRNA ligase (426 aa).

Belongs to the class-II aminoacyl-tRNA synthetase family. In terms of assembly, homodimer.

It is found in the cytoplasm. The catalysed reaction is tRNA(His) + L-histidine + ATP = L-histidyl-tRNA(His) + AMP + diphosphate + H(+). The polypeptide is Histidine--tRNA ligase (Prochlorococcus marinus (strain MIT 9301)).